A 56-amino-acid chain; its full sequence is Small ribosomal subunit protein uS14 (56 aa).

This sequence belongs to the universal ribosomal protein uS14 family.

The protein is Small ribosomal subunit protein uS14 (RPS29) of Kluyveromyces lactis (strain ATCC 8585 / CBS 2359 / DSM 70799 / NBRC 1267 / NRRL Y-1140 / WM37) (Yeast).